The following is a 274-amino-acid chain: Trehalose transport system permease protein SugB (274 aa).

A run of 6 helical transmembrane segments spans residues tyrosine 8–phenylalanine 28, isoleucine 70–alanine 90, leucine 102–phenylalanine 122, leucine 137–phenylalanine 157, valine 182–alanine 202, and glycine 239–phenylalanine 259. The ABC transmembrane type-1 domain occupies leucine 66–phenylalanine 259.

It belongs to the binding-protein-dependent transport system permease family. In terms of assembly, the complex is composed of two ATP-binding proteins (SugC), two transmembrane proteins (Suga and SugB) and a solute-binding protein (LpqY).

The protein resides in the cell inner membrane. Part of the ABC transporter complex LpqY-SugA-SugB-SugC, which is highly specific for uptake of trehalose. Involved in the recycling of extracellular trehalose released from trehalose-containing molecules synthesized by M.tuberculosis. Trehalose uptake is essential for virulence. Probably responsible for the translocation of the substrate across the membrane. The sequence is that of Trehalose transport system permease protein SugB (sugB) from Mycobacterium tuberculosis (strain CDC 1551 / Oshkosh).